A 477-amino-acid chain; its full sequence is C4-dicarboxylate transport protein 1 (477 aa).

8 helical membrane-spanning segments follow: residues 21 to 39 (PYVQ…GHFY), 59 to 76 (MIIA…IAGM), 89 to 111 (AMVY…GNVI), 162 to 179 (ILQV…LAMV), 200 to 221 (LVGI…FTIG), 231 to 253 (LAML…LGAV), 342 to 364 (VLLL…AGFV), and 368 to 387 (ATLS…ILGV). The segment at 435–477 (SAGQPLITPAPSNSAASLPVESPGWSQTPDDRAAGSKQTLAGR) is disordered.

Belongs to the dicarboxylate/amino acid:cation symporter (DAACS) (TC 2.A.23) family.

The protein localises to the cell inner membrane. Functionally, responsible for the transport of dicarboxylates such as succinate, fumarate, and malate from the periplasm across the membrane. This transport system plays an important role in the energy supply of rhizobium-legume symbionts. The protein is C4-dicarboxylate transport protein 1 (dctA1) of Mesorhizobium japonicum (strain LMG 29417 / CECT 9101 / MAFF 303099) (Mesorhizobium loti (strain MAFF 303099)).